Consider the following 499-residue polypeptide: UDP-N-acetylmuramoylalanine--D-glutamate ligase (499 aa).

128 to 134 (GTNGKTT) contributes to the ATP binding site.

The protein belongs to the MurCDEF family.

It localises to the cytoplasm. The catalysed reaction is UDP-N-acetyl-alpha-D-muramoyl-L-alanine + D-glutamate + ATP = UDP-N-acetyl-alpha-D-muramoyl-L-alanyl-D-glutamate + ADP + phosphate + H(+). Its pathway is cell wall biogenesis; peptidoglycan biosynthesis. Its function is as follows. Cell wall formation. Catalyzes the addition of glutamate to the nucleotide precursor UDP-N-acetylmuramoyl-L-alanine (UMA). This Rhodococcus jostii (strain RHA1) protein is UDP-N-acetylmuramoylalanine--D-glutamate ligase.